The primary structure comprises 126 residues: Glycine cleavage system H protein (126 aa).

Residues 22-104 (TVTIGVTDFA…YGEGWMIKIK (83 aa)) form the Lipoyl-binding domain. Lys-63 is modified (N6-lipoyllysine).

This sequence belongs to the GcvH family. The glycine cleavage system is composed of four proteins: P, T, L and H. Requires (R)-lipoate as cofactor.

The glycine cleavage system catalyzes the degradation of glycine. The H protein shuttles the methylamine group of glycine from the P protein to the T protein. In Christiangramia forsetii (strain DSM 17595 / CGMCC 1.15422 / KT0803) (Gramella forsetii), this protein is Glycine cleavage system H protein.